Consider the following 62-residue polypeptide: Alpha-conotoxin-like Qc1.2 (62 aa).

Residues 1–21 form the signal peptide; that stretch reads MGMRMMFTVFLLVALATTVAS. A propeptide spanning residues 22-48 is cleaved from the precursor; the sequence is FTLDRASNGRNAAADDKPSDWIALAIK. A Pyrrolidone carboxylic acid modification is found at Q49. 2 cysteine pairs are disulfide-bonded: C50–C56 and C51–C61.

It belongs to the conotoxin A superfamily. In terms of tissue distribution, expressed by the venom duct.

The protein resides in the secreted. Its function is as follows. Alpha-conotoxins bind to the nicotinic acetylcholine receptors (nAChR) and inhibit them. This synthetic peptide (10 uM) selectively, but weakly inhibits both rat neuronal alpha-3-beta-2/CHRNA3-CHRNB2 (63%) and alpha-3-beta-4/CHRNA3-CHRNB4 (37%) subtypes of nAChR. The protein is Alpha-conotoxin-like Qc1.2 of Conus quercinus (Oak cone).